A 589-amino-acid chain; its full sequence is MPTVSVKRDLLFQALGRTYTDEEFDELCFEFGLELDEITSEKEIISKEQGNVKAAGASDVVLYKIDVPANRYDLLCLEGLVRGLQVFKERIKAPVYKRVMPDGKIQKLIITEETAKIRPFAVAAVLRNIKFTKDRYDSFIELQEKLHQNICRKRALVAIGTHDLDTLSGPFTYTAKRPSDIKFKPLNKTKEYTACELMNIYKTDNHLKHYLHIIENKPLYPVIYDSNGVVLSMPPIINGDHSRITVNTRNIFIECTGTDFTKAKIVLDIIVTMFSEYCENQFTVEAAEVVFPNGKSHTFPELAYRKEMVRADLINKKVGIRETPENLAKLLTRMYLKSEVIGDGNQIEIEIPPTRADIIHACDIVEDAAIAYGYNNIQMTLPKTYTIANQFPLNKLTELLRHDMAAAGFTEALTFALCSQEDIADKLGVDISATKAVHISNPKTAEFQVARTTLLPGLLKTIAANRKMPLPLKLFEISDIVIKDSNTDVGAKNYRHLCAVYYNKNPGFEIIHGLLDRIMQLLDVPPGEDKGGYVIKASEGPAFFPGRCAEIFARGQSVGKLGVLHPDVITKFELTMPCSSLEINVGPFL.

The B5 domain maps to 302–379; that stretch reads LAYRKEMVRA…IAYGYNNIQM (78 aa). Residues Asp-357, Asp-363, Glu-366, and Asp-367 each contribute to the Mg(2+) site.

It belongs to the phenylalanyl-tRNA synthetase beta subunit family. Type 2 subfamily. Heterotetramer; dimer of two heterodimers formed by FARSA and FARSB. Mg(2+) is required as a cofactor.

It is found in the cytoplasm. The enzyme catalyses tRNA(Phe) + L-phenylalanine + ATP = L-phenylalanyl-tRNA(Phe) + AMP + diphosphate + H(+). The chain is Phenylalanine--tRNA ligase beta subunit (FARSB) from Homo sapiens (Human).